The primary structure comprises 556 residues: Formate--tetrahydrofolate ligase (556 aa).

Residue 65–72 (TPAGEGKT) coordinates ATP.

Belongs to the formate--tetrahydrofolate ligase family.

It carries out the reaction (6S)-5,6,7,8-tetrahydrofolate + formate + ATP = (6R)-10-formyltetrahydrofolate + ADP + phosphate. It functions in the pathway one-carbon metabolism; tetrahydrofolate interconversion. In Agathobacter rectalis (strain ATCC 33656 / DSM 3377 / JCM 17463 / KCTC 5835 / VPI 0990) (Eubacterium rectale), this protein is Formate--tetrahydrofolate ligase.